A 189-amino-acid polypeptide reads, in one-letter code: Glycerol-3-phosphate acyltransferase (189 aa).

The next 5 helical transmembrane spans lie at 1-21, 50-70, 77-97, 111-131, and 151-171; these read MFWL…AIVL, KLAI…VLLA, LHAQ…PLYF, MLMG…LLTF, and LLAW…AMIV.

Belongs to the PlsY family. In terms of assembly, probably interacts with PlsX.

It localises to the cell inner membrane. The enzyme catalyses an acyl phosphate + sn-glycerol 3-phosphate = a 1-acyl-sn-glycero-3-phosphate + phosphate. Its pathway is lipid metabolism; phospholipid metabolism. In terms of biological role, catalyzes the transfer of an acyl group from acyl-phosphate (acyl-PO(4)) to glycerol-3-phosphate (G3P) to form lysophosphatidic acid (LPA). This enzyme utilizes acyl-phosphate as fatty acyl donor, but not acyl-CoA or acyl-ACP. The chain is Glycerol-3-phosphate acyltransferase from Pseudomonas putida (strain GB-1).